Here is a 526-residue protein sequence, read N- to C-terminus: Probable fucosyltransferase 7 (526 aa).

The Cytoplasmic segment spans residues 1 to 4 (MKTK). Residues 5–25 (LMITIFSCLLLWSMLLLLSFS) form a helical; Signal-anchor for type II membrane protein membrane-spanning segment. Over 26–526 (NIFKHQLLGA…KLVDDTKNEL (501 aa)) the chain is Lumenal. N-linked (GlcNAc...) asparagine glycosylation is found at asparagine 211, asparagine 215, and asparagine 363.

Belongs to the glycosyltransferase 37 family. Expressed in roots, leaves, stems and seedlings.

It is found in the golgi apparatus. Its subcellular location is the golgi stack membrane. The protein operates within protein modification; protein glycosylation. Functionally, may be involved in cell wall biosynthesis. May act as a fucosyltransferase. In Arabidopsis thaliana (Mouse-ear cress), this protein is Probable fucosyltransferase 7 (FUT7).